The following is a 281-amino-acid chain: ATP synthase gamma chain (281 aa).

It belongs to the ATPase gamma chain family. As to quaternary structure, F-type ATPases have 2 components, CF(1) - the catalytic core - and CF(0) - the membrane proton channel. CF(1) has five subunits: alpha(3), beta(3), gamma(1), delta(1), epsilon(1). CF(0) has three main subunits: a, b and c.

The protein localises to the cell membrane. Produces ATP from ADP in the presence of a proton gradient across the membrane. The gamma chain is believed to be important in regulating ATPase activity and the flow of protons through the CF(0) complex. In Desulfitobacterium hafniense (strain DSM 10664 / DCB-2), this protein is ATP synthase gamma chain.